We begin with the raw amino-acid sequence, 315 residues long: Acetyl-coenzyme A carboxylase carboxyl transferase subunit alpha (315 aa).

The 254-residue stretch at 40 to 293 folds into the CoA carboxyltransferase C-terminal domain; that stretch reads LQDKSKTLTE…REELSSQLAM (254 aa).

Belongs to the AccA family. Acetyl-CoA carboxylase is a heterohexamer composed of biotin carboxyl carrier protein (AccB), biotin carboxylase (AccC) and two subunits each of ACCase subunit alpha (AccA) and ACCase subunit beta (AccD).

Its subcellular location is the cytoplasm. The enzyme catalyses N(6)-carboxybiotinyl-L-lysyl-[protein] + acetyl-CoA = N(6)-biotinyl-L-lysyl-[protein] + malonyl-CoA. It participates in lipid metabolism; malonyl-CoA biosynthesis; malonyl-CoA from acetyl-CoA: step 1/1. Functionally, component of the acetyl coenzyme A carboxylase (ACC) complex. First, biotin carboxylase catalyzes the carboxylation of biotin on its carrier protein (BCCP) and then the CO(2) group is transferred by the carboxyltransferase to acetyl-CoA to form malonyl-CoA. The chain is Acetyl-coenzyme A carboxylase carboxyl transferase subunit alpha from Pseudomonas syringae pv. tomato (strain ATCC BAA-871 / DC3000).